The primary structure comprises 220 residues: Inner membrane-spanning protein YciB (220 aa).

The next 6 helical transmembrane spans lie at 20–40 (EVPP…FFFA), 57–77 (IGAP…IALA), 86–106 (LPIM…LTLW), 123–143 (LFGG…GYVF), 156–176 (KLTL…EIVW), and 187–207 (FKVW…MPLI).

It belongs to the YciB family.

It localises to the cell inner membrane. Its function is as follows. Plays a role in cell envelope biogenesis, maintenance of cell envelope integrity and membrane homeostasis. The polypeptide is Inner membrane-spanning protein YciB (Brucella melitensis biotype 2 (strain ATCC 23457)).